Consider the following 89-residue polypeptide: DNA-directed RNA polymerase subunit Rpo6 (89 aa).

Belongs to the archaeal Rpo6/eukaryotic RPB6 RNA polymerase subunit family. Part of the RNA polymerase complex.

The protein resides in the cytoplasm. The catalysed reaction is RNA(n) + a ribonucleoside 5'-triphosphate = RNA(n+1) + diphosphate. In terms of biological role, DNA-dependent RNA polymerase (RNAP) catalyzes the transcription of DNA into RNA using the four ribonucleoside triphosphates as substrates. The sequence is that of DNA-directed RNA polymerase subunit Rpo6 from Aeropyrum pernix (strain ATCC 700893 / DSM 11879 / JCM 9820 / NBRC 100138 / K1).